A 469-amino-acid polypeptide reads, in one-letter code: UDP-N-acetylmuramate--L-alanine ligase (469 aa).

113 to 119 contacts ATP; the sequence is GTHGKTT.

This sequence belongs to the MurCDEF family.

It is found in the cytoplasm. It catalyses the reaction UDP-N-acetyl-alpha-D-muramate + L-alanine + ATP = UDP-N-acetyl-alpha-D-muramoyl-L-alanine + ADP + phosphate + H(+). The protein operates within cell wall biogenesis; peptidoglycan biosynthesis. Its function is as follows. Cell wall formation. This Neisseria meningitidis serogroup B (strain ATCC BAA-335 / MC58) protein is UDP-N-acetylmuramate--L-alanine ligase.